Here is a 529-residue protein sequence, read N- to C-terminus: Cytochrome P450 monooxygenase ausG (529 aa).

The helical transmembrane segment at Phe31 to Phe51 threads the bilayer. Cys470 is a binding site for heme.

It belongs to the cytochrome P450 family. Heme serves as cofactor.

The protein localises to the membrane. It participates in secondary metabolite biosynthesis; terpenoid biosynthesis. Its function is as follows. Cytochrome P450 monooxygenase; part of the gene cluster B that mediates the biosynthesis of austinol and dehydroaustinol, two fungal meroterpenoids. The first step of the pathway is the synthesis of 3,5-dimethylorsellinic acid by the polyketide synthase ausA. 3,5-dimethylorsellinic acid is then prenylated by the polyprenyl transferase ausN. Further epoxidation by the FAD-dependent monooxygenase ausM and cyclization by the probable terpene cyclase ausL lead to the formation of protoaustinoid A. Protoaustinoid A is then oxidized to spiro-lactone preaustinoid A3 by the combined action of the FAD-binding monooxygenases ausB and ausC, and the dioxygenase ausE. Acid-catalyzed keto-rearrangement and ring contraction of the tetraketide portion of preaustinoid A3 by ausJ lead to the formation of preaustinoid A4. The aldo-keto reductase ausK, with the help of ausH, is involved in the next step by transforming preaustinoid A4 into isoaustinone which is in turn hydroxylated by the P450 monooxygenase ausI to form austinolide. Finally, the cytochrome P450 monooxygenase ausG modifies austinolide to austinol. Austinol can be further modified to dehydroaustinol which forms a diffusible complex with diorcinol that initiates conidiation. Due to genetic rearrangements of the clusters and the subsequent loss of some enzymes, the end products of the Emericella nidulans austinoid biosynthesis clusters are austinol and dehydroaustinol, even if additional enzymes, such as the O-acetyltransferase ausQ and the cytochrome P450 monooxygenase ausR are still functional. In Emericella nidulans (strain FGSC A4 / ATCC 38163 / CBS 112.46 / NRRL 194 / M139) (Aspergillus nidulans), this protein is Cytochrome P450 monooxygenase ausG.